Reading from the N-terminus, the 529-residue chain is Bifunctional purine biosynthesis protein PurH (529 aa).

Positions 1–148 constitute an MGS-like domain; sequence MQQRRPVRRA…KNHKDVAIVV (148 aa).

It belongs to the PurH family.

The catalysed reaction is (6R)-10-formyltetrahydrofolate + 5-amino-1-(5-phospho-beta-D-ribosyl)imidazole-4-carboxamide = 5-formamido-1-(5-phospho-D-ribosyl)imidazole-4-carboxamide + (6S)-5,6,7,8-tetrahydrofolate. The enzyme catalyses IMP + H2O = 5-formamido-1-(5-phospho-D-ribosyl)imidazole-4-carboxamide. Its pathway is purine metabolism; IMP biosynthesis via de novo pathway; 5-formamido-1-(5-phospho-D-ribosyl)imidazole-4-carboxamide from 5-amino-1-(5-phospho-D-ribosyl)imidazole-4-carboxamide (10-formyl THF route): step 1/1. The protein operates within purine metabolism; IMP biosynthesis via de novo pathway; IMP from 5-formamido-1-(5-phospho-D-ribosyl)imidazole-4-carboxamide: step 1/1. This chain is Bifunctional purine biosynthesis protein PurH, found in Salmonella newport (strain SL254).